The following is a 353-amino-acid chain: Nicotinate-nucleotide--dimethylbenzimidazole phosphoribosyltransferase (353 aa).

Catalysis depends on Glu320, which acts as the Proton acceptor.

Belongs to the CobT family.

The enzyme catalyses 5,6-dimethylbenzimidazole + nicotinate beta-D-ribonucleotide = alpha-ribazole 5'-phosphate + nicotinate + H(+). Its pathway is nucleoside biosynthesis; alpha-ribazole biosynthesis; alpha-ribazole from 5,6-dimethylbenzimidazole: step 1/2. In terms of biological role, catalyzes the synthesis of alpha-ribazole-5'-phosphate from nicotinate mononucleotide (NAMN) and 5,6-dimethylbenzimidazole (DMB). In Syntrophotalea carbinolica (strain DSM 2380 / NBRC 103641 / GraBd1) (Pelobacter carbinolicus), this protein is Nicotinate-nucleotide--dimethylbenzimidazole phosphoribosyltransferase.